The sequence spans 290 residues: Ribosomal RNA small subunit methyltransferase A (290 aa).

Asn27, Leu29, Gly54, Glu75, Asp100, and Asn125 together coordinate S-adenosyl-L-methionine.

This sequence belongs to the class I-like SAM-binding methyltransferase superfamily. rRNA adenine N(6)-methyltransferase family. RsmA subfamily.

It is found in the cytoplasm. The enzyme catalyses adenosine(1518)/adenosine(1519) in 16S rRNA + 4 S-adenosyl-L-methionine = N(6)-dimethyladenosine(1518)/N(6)-dimethyladenosine(1519) in 16S rRNA + 4 S-adenosyl-L-homocysteine + 4 H(+). Specifically dimethylates two adjacent adenosines (A1518 and A1519) in the loop of a conserved hairpin near the 3'-end of 16S rRNA in the 30S particle. May play a critical role in biogenesis of 30S subunits. The sequence is that of Ribosomal RNA small subunit methyltransferase A from Streptococcus pneumoniae (strain JJA).